The following is a 482-amino-acid chain: Glutamate--tRNA ligase (482 aa).

Residues 10–20 (PSPTGFLHIGN) carry the 'HIGH' region motif. A 'KMSKS' region motif is present at residues 253 to 257 (KLSKR). Lys-256 lines the ATP pocket.

It belongs to the class-I aminoacyl-tRNA synthetase family. Glutamate--tRNA ligase type 1 subfamily. As to quaternary structure, monomer.

It is found in the cytoplasm. It catalyses the reaction tRNA(Glu) + L-glutamate + ATP = L-glutamyl-tRNA(Glu) + AMP + diphosphate. In terms of biological role, catalyzes the attachment of glutamate to tRNA(Glu) in a two-step reaction: glutamate is first activated by ATP to form Glu-AMP and then transferred to the acceptor end of tRNA(Glu). This is Glutamate--tRNA ligase from Mesoplasma florum (strain ATCC 33453 / NBRC 100688 / NCTC 11704 / L1) (Acholeplasma florum).